The sequence spans 255 residues: Tabinhibitin 2 (255 aa).

Residues 1–23 (MISILVSRFLLAALVLQYATIDA) form the signal peptide. The Cell attachment site signature appears at 32–34 (RGD). The SCP domain occupies 67 to 211 (LSKINDVRDH…KARALLTCNF (145 aa)).

Belongs to the CRISP family. In terms of tissue distribution, expressed in salivary glands.

The protein resides in the secreted. Its function is as follows. Inhibits platelet aggregation induced by all agonists tested (ADP, arachidonic acid, the thromboxane A2 analog U46619, thrombin, and snake venom snaclecs (TMVA that activates platelet through GPIB, and stejnulxin that specifically acts through GPVI (GP6))). May act by competing with fibrinogen for binding to glycoprotein IIb/IIIa (ITGA2B/ITGB3). The chain is Tabinhibitin 2 from Tabanus yao (Horsefly).